The sequence spans 231 residues: MSMVVRTLGRVDYLATVQAMQDYTARRGPQDPDLLWLCEHDRLYTQGLAGQDRHVLAPGDIPVLQSNRGGQVTFHGPGQVVAYPLIDLRRAGYYVKEYVYRIEEAVIRCLAQWGVTGHRVAGAPGIYVRPDDPGGHALLPLRPPKSPGTPAPAPDFQGLGKIAALGVKVSRHCSYHGVALNVAMDLEPFARINPCGYAGLRTVDLSTIGVRLRWDEAAQLLGRQLCIWLAP.

In terms of domain architecture, BPL/LPL catalytic spans P29 to P231. Substrate is bound by residues R68–H75, A164–G166, and G177–A179. Catalysis depends on C195, which acts as the Acyl-thioester intermediate.

This sequence belongs to the LipB family.

The protein resides in the cytoplasm. It carries out the reaction octanoyl-[ACP] + L-lysyl-[protein] = N(6)-octanoyl-L-lysyl-[protein] + holo-[ACP] + H(+). It functions in the pathway protein modification; protein lipoylation via endogenous pathway; protein N(6)-(lipoyl)lysine from octanoyl-[acyl-carrier-protein]: step 1/2. Functionally, catalyzes the transfer of endogenously produced octanoic acid from octanoyl-acyl-carrier-protein onto the lipoyl domains of lipoate-dependent enzymes. Lipoyl-ACP can also act as a substrate although octanoyl-ACP is likely to be the physiological substrate. In Verminephrobacter eiseniae (strain EF01-2), this protein is Octanoyltransferase.